The following is a 236-amino-acid chain: Small ribosomal subunit protein uS3 (236 aa).

The KH type-2 domain occupies 39 to 107 (IREILHKELK…DVVINIVEIR (69 aa)). Residues 213–236 (MAQDKRMNEGGGESSQPRSRRDAA) are disordered.

This sequence belongs to the universal ribosomal protein uS3 family. In terms of assembly, part of the 30S ribosomal subunit. Forms a tight complex with proteins S10 and S14.

Functionally, binds the lower part of the 30S subunit head. Binds mRNA in the 70S ribosome, positioning it for translation. In Bradyrhizobium sp. (strain BTAi1 / ATCC BAA-1182), this protein is Small ribosomal subunit protein uS3.